A 147-amino-acid chain; its full sequence is 3-dehydroquinate dehydratase (147 aa).

Tyr-24 serves as the catalytic Proton acceptor. Residues Asn-74, His-80, and Asp-87 each coordinate substrate. His-100 (proton donor) is an active-site residue. Substrate is bound by residues 101-102 (LS) and Arg-111.

The protein belongs to the type-II 3-dehydroquinase family. Homododecamer.

The enzyme catalyses 3-dehydroquinate = 3-dehydroshikimate + H2O. Its pathway is metabolic intermediate biosynthesis; chorismate biosynthesis; chorismate from D-erythrose 4-phosphate and phosphoenolpyruvate: step 3/7. Functionally, catalyzes a trans-dehydration via an enolate intermediate. In Azorhizobium caulinodans (strain ATCC 43989 / DSM 5975 / JCM 20966 / LMG 6465 / NBRC 14845 / NCIMB 13405 / ORS 571), this protein is 3-dehydroquinate dehydratase.